The following is a 414-amino-acid chain: MESHPHNKTDQTQHIILVHGPIIIGAGPSGLATSACLSSRGVPSLILERSDSIASLWKSKTYDRLRLHLPKHFCRLPLLDFPEYYPKYPSKNEFLAYLESYASHFRIAPRFNKNVQNAAYDSSSGFWRVKTHDNTEYLSKWLIVATGENADPYFPEIPGRKKFSGGKIVHASEYKSGEEFRRQKVLVVGCGNSGMEISLDLVRHNASPHLVVRNTVHVLPREILGVSTFGVGMTLLKCLPLRLVDKFLLLMANLSFGNTDRLGLRRPKTGPLELKNVTGKSPVLDVGAMSLIRSGMIQIMEGVKEITKKGAKFMDGQEKDFDSIIFATGYKSNVPTWLQGGDFFTDDGMPKTPFPNGWRGGKGLYTVGFTRRGLLGTASDAVKIAGEIGDQWRDEIKGSTRNMCSSRFVFTSKS.

25 to 30 (GAGPSG) contacts FAD. Residue 189–194 (GCGNSG) participates in NADP(+) binding.

Belongs to the FMO family. FAD serves as cofactor. Expressed in the apical meristems and young floral primordia. Detected in the floral meristems and at the base of the floral organs.

It catalyses the reaction indole-3-pyruvate + NADPH + O2 + H(+) = (indol-3-yl)acetate + CO2 + NADP(+) + H2O. The protein operates within plant hormone metabolism; auxin biosynthesis. Involved in auxin biosynthesis, but not in the tryptamine or the CYP79B2/B3 branches. Catalyzes in vitro the N-oxidation of tryptamine to form N-hydroxyl tryptamine. Involved during embryogenesis and seedling development. Required for the formation of floral organs and vascular tissues. Belongs to the set of redundant YUCCA genes probably responsible for auxin biosynthesis in shoots. This chain is Probable indole-3-pyruvate monooxygenase YUCCA1 (YUC1), found in Arabidopsis thaliana (Mouse-ear cress).